Reading from the N-terminus, the 527-residue chain is UvrABC system protein C (527 aa).

The GIY-YIG domain occupies 9 to 87; the sequence is KNPGCYIYKN…IKKYSPKYNI (79 aa). The region spanning 191–226 is the UVR domain; the sequence is DSLIHELKNEMNEKSKNLQFEEALLIREEINAIERL.

Belongs to the UvrC family. Interacts with UvrB in an incision complex.

The protein localises to the cytoplasm. The UvrABC repair system catalyzes the recognition and processing of DNA lesions. UvrC both incises the 5' and 3' sides of the lesion. The N-terminal half is responsible for the 3' incision and the C-terminal half is responsible for the 5' incision. The sequence is that of UvrABC system protein C from Methanococcus maripaludis (strain DSM 14266 / JCM 13030 / NBRC 101832 / S2 / LL).